The chain runs to 140 residues: Large-conductance mechanosensitive channel (140 aa).

3 helical membrane passes run 14–34 (VLDL…VKSL), 37–57 (YLIN…DWVL), and 66–86 (FGSF…VFIL).

The protein belongs to the MscL family. As to quaternary structure, homopentamer.

It localises to the cell membrane. Its function is as follows. Channel that opens in response to stretch forces in the membrane lipid bilayer. May participate in the regulation of osmotic pressure changes within the cell. This chain is Large-conductance mechanosensitive channel, found in Pediococcus pentosaceus (strain ATCC 25745 / CCUG 21536 / LMG 10740 / 183-1w).